The following is a 292-amino-acid chain: Tricin synthase 2 (292 aa).

The disordered stretch occupies residues 21 to 46 (RTTPASRVSSTAMAAANGDASHGANG). The span at 23–32 (TPASRVSSTA) shows a compositional bias: polar residues. S-adenosyl-L-methionine contacts are provided by residues S108, E130, 132–133 (GV), S138, D156, and A185. D208 is a binding site for a divalent metal cation. D210 is a binding site for S-adenosyl-L-methionine. A divalent metal cation contacts are provided by D234 and N235.

Belongs to the class I-like SAM-binding methyltransferase superfamily. Cation-dependent O-methyltransferase family. CCoAMT subfamily. Mg(2+) is required as a cofactor. It depends on Mn(2+) as a cofactor. In terms of tissue distribution, expressed in stems only.

The catalysed reaction is tricetin + 2 S-adenosyl-L-methionine = 3',5'-di-O-methyltricetin + 2 S-adenosyl-L-homocysteine + 2 H(+). Its function is as follows. Catalyzes the stepwise methylation of tricetin to its 3'-mono- and 3',5'-dimethyl ethers. No 3',4',5'-trimethylated ester derivatives are produced. Can use caffeoyl CoA, 5-hydroxyferulic acid, luteolin, tricetin, quercetin, myrcetin and 7,8-dihydroxyflavone as substrates, but not naringenin, apigenin or kaempferol. The 2,3-double bond and the O-dihydroxyl group of the substrate are both required for catalytic activity of the enzyme. The protein is Tricin synthase 2 (ROMT-17) of Oryza sativa subsp. japonica (Rice).